We begin with the raw amino-acid sequence, 547 residues long: uncharacterized protein (547 aa).

Residues 1-21 (MVKKHQNSKMGNTNHFGHLKS) are Extracellular-facing. A helical membrane pass occupies residues 22–42 (FVGGNVVALGAGTPYLFSFYA). Over 43 to 58 (PQLLSKCHIPVSASSK) the chain is Cytoplasmic. Residues 59–79 (LSFSLTIGSSLMGILAGIVVD) traverse the membrane as a helical segment. Residues 80-83 (RSPK) are Extracellular-facing. The chain crosses the membrane as a helical span at residues 84 to 104 (LSCLIGSMCVFIAYLILNLCY). Over 105–110 (KHEWSS) the chain is Cytoplasmic. Residues 111–131 (TFLISLSLVLIGYGSVSGFYA) form a helical membrane-spanning segment. The Extracellular segment spans residues 132-144 (SVKCANTNFPQHR). The helical transmembrane segment at 145–165 (GTAGAFPVSLYGLSGMVFSYL) threads the bilayer. Over 166–175 (CSKLFGENIE) the chain is Cytoplasmic. Residues 176-196 (HVFIFLMVACGCMILVGYFSL) form a helical membrane-spanning segment. Residues 197–323 (DIFSNAEGDD…LKSSTFIGYY (127 aa)) are Extracellular-facing. Ser-237 carries the post-translational modification Phosphoserine. Positions 275–300 (LLSPSSPHTKYDFEDENTSKNTVGEN) are disordered. The helical transmembrane segment at 324-344 (IVLGILQGVGLMYIYSVGFMV) threads the bilayer. The Cytoplasmic segment spans residues 345–398 (QAQVSTPPLNQLPINAEKIQSLQVTLLSLLSFCGRLSSGPISDFLVKKFKAQRL). A helical membrane pass occupies residues 399–419 (WNIVIASLLVFLASNKISHDF). At 420–437 (SSIEDPSLRASKSFKNIS) the chain is on the extracellular side. Residues 438-458 (VCSAIFGYSFGVLFGTFPSIV) form a helical membrane-spanning segment. Over 459-469 (ADRFGTNGYST) the chain is Cytoplasmic. Residues 470-490 (LWGVLTTGGVFSVSVFTDILG) form a helical membrane-spanning segment. The Extracellular portion of the chain corresponds to 491 to 514 (RDFKANTGDDDGNCKKGVLCYSYT). The chain crosses the membrane as a helical span at residues 515-535 (FMVTKYCAAFNLLFVLGIIGY). Residues 536-547 (TYYRRRATANSL) lie on the Cytoplasmic side of the membrane.

The protein localises to the membrane. This is an uncharacterized protein from Saccharomyces cerevisiae (strain ATCC 204508 / S288c) (Baker's yeast).